Consider the following 147-residue polypeptide: MEDDEEETTASTLRGKPRPPPVSAQSAFSYIPPRRLDPKEHSYYYRPARTGIISLYDCIFKRRLDYDQKLHRDDREHAKSLGLHVNEEEQERPVGVLTSSVYGKRINQPIEPLNRDFGRANHVQADFYRKNDIPSLKEPGFGHIAPS.

Residues 1–36 are disordered; the sequence is MEDDEEETTASTLRGKPRPPPVSAQSAFSYIPPRRL.

Microtubule inner protein component of sperm flagellar doublet microtubules.

The protein resides in the cytoplasm. It is found in the cytoskeleton. The protein localises to the cilium axoneme. It localises to the flagellum axoneme. Microtubule inner protein (MIP) part of the dynein-decorated doublet microtubules (DMTs) in cilia axoneme, which is required for motile cilia beating. This is Cilia- and flagella-associated protein 90 from Homo sapiens (Human).